Here is a 264-residue protein sequence, read N- to C-terminus: Small ribosomal subunit protein mS23 (264 aa).

Positions 233–264 (ARTSNPAGSWKDDTTLNTAQEEESTTSENLHF) are disordered.

It belongs to the mitochondrion-specific ribosomal protein mS23 family. Component of the mitochondrial small ribosomal subunit. Mature mitochondrial ribosomes consist of a small (37S) and a large (54S) subunit. The 37S subunit contains at least 33 different proteins and 1 molecule of RNA (15S). The 54S subunit contains at least 45 different proteins and 1 molecule of RNA (21S).

The protein resides in the mitochondrion. The polypeptide is Small ribosomal subunit protein mS23 (RSM25) (Saccharomyces cerevisiae (strain YJM789) (Baker's yeast)).